The sequence spans 438 residues: Asparagine--tRNA ligase (438 aa).

It belongs to the class-II aminoacyl-tRNA synthetase family. Homodimer.

It is found in the cytoplasm. It carries out the reaction tRNA(Asn) + L-asparagine + ATP = L-asparaginyl-tRNA(Asn) + AMP + diphosphate + H(+). In Thermus thermophilus (strain ATCC BAA-163 / DSM 7039 / HB27), this protein is Asparagine--tRNA ligase.